The following is a 475-amino-acid chain: 7-dehydrocholesterol reductase (475 aa).

Residues 1-21 (MAAKSQPNIPKAKSLDGVTND) form a disordered region. Ser-14 is subject to Phosphoserine. The next 6 helical transmembrane spans lie at 40–60 (LASV…FIMA), 154–174 (THLL…TIIF), 177–197 (WIPL…FAMV), 266–286 (VTNA…DFFW), 306–326 (LGWG…LYLV), and 331–351 (QLST…YYIF). NADP(+) is bound by residues Lys-358, Arg-362, Leu-395, Trp-400, and 407–408 (NY). Residues 420–440 (LACGGGHLLPYFYIIYMAILL) form a helical membrane-spanning segment. Residues Asp-447, 451–455 (CASKY), and Tyr-462 each bind NADP(+).

This sequence belongs to the ERG4/ERG24 family. Interacts with DHCR24; this interaction regulates DHCR7 activity. Interacts with TMEM147. Widely expressed. Most abundant in adrenal gland, liver, testis, and brain.

It is found in the endoplasmic reticulum membrane. The enzyme catalyses cholesterol + NADP(+) = 7-dehydrocholesterol + NADPH + H(+). The catalysed reaction is 7-dehydrodesmosterol + NADPH + H(+) = desmosterol + NADP(+). It catalyses the reaction 5,6alpha-epoxy-5alpha-cholestan-3beta-ol + H2O = 5alpha-cholestane-3beta,5,6beta-triol. It carries out the reaction 5,6beta-epoxy-5beta-cholestan-3beta-ol + H2O = 5alpha-cholestane-3beta,5,6beta-triol. It functions in the pathway steroid biosynthesis; cholesterol biosynthesis. With respect to regulation, 7-DHC reductase and cholesterol-5,6-epoxide hydrolase (ChEH) activities are inhibited by tamoxifen and the selective AEBS ligand (4-benzyl-phenoxy)-ethyl-N-pyrrolidine (PBPE). ChEH activity is inhibited by oleic acid. Oxidoreductase that catalyzes the last step of the cholesterol synthesis pathway, which transforms cholesta-5,7-dien-3beta-ol (7-dehydrocholesterol,7-DHC) into cholesterol by reducing the C7-C8 double bond of its sterol core. Can also metabolize cholesta-5,7,24-trien-3beta-ol (7-dehydrodemosterol, 7-DHD) to desmosterol, which is then metabolized by the Delta(24)-sterol reductase (DHCR24) to cholesterol. Modulates ferroptosis (a form of regulated cell death driven by iron-dependent lipid peroxidation) through the metabolic breakdown of the anti-ferroptotic metabolites 7-DHC and 7-DHD which, when accumulated, divert the propagation of peroxyl radical-mediated damage from phospholipid components to its sterol core, protecting plasma and mitochondrial membranes from phospholipid autoxidation. In terms of biological role, component of the microsomal antiestrogen binding site (AEBS), a multiproteic complex at the ER membrane that consists of an association between cholestenol Delta-isomerase/EBP and DHCR7. This complex is responsible for cholesterol-5,6-epoxide hydrolase (ChEH) activity, which consists in the hydration of cholesterol-5,6-epoxides (5,6-EC) into cholestane-3beta,5alpha,6beta-triol (CT). The precise role of each component of this complex has not been described yet. The sequence is that of 7-dehydrocholesterol reductase from Homo sapiens (Human).